Reading from the N-terminus, the 332-residue chain is MSRFGPFPDPSALLDHDEAAHAFATMLDGGARDEQIAAFLVALADRGETMVEIAAAAQAMRDRLIPIEAPAGAIDVCGTGGDGHHTLNVSTAVSIVVAACDVPVAKHGNRAASSKSGAADTLEALGLDMERADRQAQEQLADLGICFLFAGTRHPAMKRIMPIRKAIGRRTIFNLMGPLANPARVTRQLVGIARPAYVPVYAEALHRLGTDHSRVISGDEGLDELSLAGGNEVAVVTPDGVRMQRSSAADAGLPTRSLAEIRGGDAAFNARALRRLLEGETGAYRDAVLYNAAAALIVAGAVDTLTEGVEEAAEAIDKGLANALLNCWIAYK.

Residues Gly78, 81–82, Thr86, 88–91, 106–114, and Ala118 contribute to the 5-phospho-alpha-D-ribose 1-diphosphate site; these read GD, NVST, and KHGNRAASS. Gly78 provides a ligand contact to anthranilate. Residue Ser90 participates in Mg(2+) binding. Position 109 (Asn109) interacts with anthranilate. Residue Arg164 coordinates anthranilate. The Mg(2+) site is built by Asp223 and Glu224.

This sequence belongs to the anthranilate phosphoribosyltransferase family. Homodimer. Mg(2+) serves as cofactor.

It catalyses the reaction N-(5-phospho-beta-D-ribosyl)anthranilate + diphosphate = 5-phospho-alpha-D-ribose 1-diphosphate + anthranilate. Its pathway is amino-acid biosynthesis; L-tryptophan biosynthesis; L-tryptophan from chorismate: step 2/5. In terms of biological role, catalyzes the transfer of the phosphoribosyl group of 5-phosphorylribose-1-pyrophosphate (PRPP) to anthranilate to yield N-(5'-phosphoribosyl)-anthranilate (PRA). In Sphingopyxis alaskensis (strain DSM 13593 / LMG 18877 / RB2256) (Sphingomonas alaskensis), this protein is Anthranilate phosphoribosyltransferase.